The following is a 226-amino-acid chain: Protein AF-9 homolog (226 aa).

In terms of domain architecture, YEATS spans 8 to 169 (RIKTLSVSRP…EEFFKILMSR (162 aa)). The stretch at 187–224 (QLEQEEIDRIEIGIEKVDKEIDELKQKLENLVKQEAIN) forms a coiled coil.

Component of the SWR1 chromatin-remodeling complex composed of at least ACT1, ARP4, RVB1, RVB2, ARP6, YAF9, VPS71, VPS72, SWC3, SWC4, SWC5, SWC7 and SWR1, and perhaps BDF1. Component of the NuA4 histone acetyltransferase complex composed of at least ACT1, ARP4, YAF9, VID21, SWC4, EAF3, EAF5, EAF6, EAF7, EPL1, ESA1, TRA1 and YNG2. Interacts with SWC4.

It is found in the cytoplasm. It localises to the nucleus. Component of the SWR1 complex which mediates the ATP-dependent exchange of histone H2A for the H2A variant HZT1 leading to transcriptional regulation of selected genes by chromatin remodeling. Component of the NuA4 histone acetyltransferase complex which is involved in transcriptional activation of selected genes principally by acetylation of nucleosomal histones H4 and H2A. The NuA4 complex is also involved in DNA repair. Yaf9 may also be required for viability in conditions in which the structural integrity of the spindle is compromised. This chain is Protein AF-9 homolog (YAF9), found in Saccharomyces cerevisiae (strain ATCC 204508 / S288c) (Baker's yeast).